The chain runs to 288 residues: Zinc finger protein 42 (288 aa).

Composition is skewed to basic and acidic residues over residues 1-11 and 26-38; these read MNEQKMNEQMK and ALDRLTLKQDEAR. The interval 1-48 is disordered; that stretch reads MNEQKMNEQMKKTAKTSGQKGPGGRALDRLTLKQDEARPVQNTRVEAP. 4 C2H2-type zinc fingers span residues 170–194, 199–221, 227–251, and 258–281; these read LECPQAGCKKKLRGKTALRKHMLVH, HVCAECGKAFTESSKLKRHFLVH, YQCTFEGCGKRFSLDFNLRTHIRIH, and VCPFDGCEKSFIQSNNQKIHILTH. Glycyl lysine isopeptide (Lys-Gly) (interchain with G-Cter in ubiquitin) cross-links involve residues K213 and K215.

Belongs to the krueppel C2H2-type zinc-finger protein family. Polyubiquitinated by RNF12, leading to proteasomal degradation. Restricted to testis, to germ cells in the early stages of spermatogenesis. Not expressed in spermatids, nor spermatozoa. Expressed in embryonic stem (ES) cells.

It localises to the nucleus. In terms of biological role, involved in the reprogramming of X-chromosome inactivation during the acquisition of pluripotency. Required for efficient elongation of TSIX, a non-coding RNA antisense to XIST. Binds DXPas34 enhancer within the TSIX promoter. Involved in ES cell self-renewal. This Mus musculus (Mouse) protein is Zinc finger protein 42 (Zfp42).